The sequence spans 377 residues: MTDNSKTRVVVGMSGGVDSSVVAYLLKQQGYDVVGVFMKNWDDTDENGYCTATEDYKDVAKVAAKIGIPYYSVNFEKEYWDRVFTYFLDEYKKGRTPNPDVICNNEIKFKAFLDYAISLGADYVATGHYAQVERDENGHQHLLRATDSNKDQTYFLSQLSAEQLDRVMFPLGGMIKPEVRKVAEEAGLSVYDKKDSVGICFIGEKNFREFLGNYLPAKAGKMMTLDGEVKGEHAGLMYYTIGQRRGLGIGGGSKNNEPWFVVGKDLSKNILYVGQGFENSHLYAASLDASDMHFVNKLGEERGRDFRCTAKFRYRAQDVPVTVHFSEDFSKVTVDFDDPARAITPGQALVLYDGEECIGGGIIDAAYNSEKKMLQYI.

ATP is bound by residues 12–19 (GMSGGVDS) and Met-38. The interval 98–100 (NPD) is interaction with target base in tRNA. Residue Cys-103 is the Nucleophile of the active site. An intrachain disulfide couples Cys-103 to Cys-200. Residue Gly-127 coordinates ATP. The segment at 150 to 152 (KDQ) is interaction with tRNA. The active-site Cysteine persulfide intermediate is the Cys-200. The segment at 313–314 (RY) is interaction with tRNA.

Belongs to the MnmA/TRMU family.

The protein localises to the cytoplasm. It catalyses the reaction S-sulfanyl-L-cysteinyl-[protein] + uridine(34) in tRNA + AH2 + ATP = 2-thiouridine(34) in tRNA + L-cysteinyl-[protein] + A + AMP + diphosphate + H(+). Functionally, catalyzes the 2-thiolation of uridine at the wobble position (U34) of tRNA, leading to the formation of s(2)U34. The protein is tRNA-specific 2-thiouridylase MnmA of Pediococcus pentosaceus (strain ATCC 25745 / CCUG 21536 / LMG 10740 / 183-1w).